Reading from the N-terminus, the 374-residue chain is C-X-C chemokine receptor type 5 (374 aa).

Topologically, residues 1–57 are extracellular; that stretch reads MNSPISLDMGAITYNMDDLYKELAIYSNSTEIPLQDSIFCSTEEGPLLTSFKTIFMP. An N-linked (GlcNAc...) asparagine glycan is attached at Asn-28. The chain crosses the membrane as a helical span at residues 58–78; the sequence is VAYSLIFLLGMMGNILVLVIL. Residues 79–90 lie on the Cytoplasmic side of the membrane; that stretch reads ERHRHTRSSTET. The chain crosses the membrane as a helical span at residues 91–111; sequence FLFHLAVADLLLVFILPFAVA. Residues 112 to 126 are Extracellular-facing; the sequence is EGSVGWVLGTFLCKT. Cys-124 and Cys-204 are joined by a disulfide. A helical transmembrane segment spans residues 127–147; the sequence is VIALHKINFYCSSLLLACIAV. Residues 148-169 lie on the Cytoplasmic side of the membrane; that stretch reads DRYLAIVHAVHAYRRRRLLSIH. The helical transmembrane segment at 170–190 threads the bilayer; it reads ITCSTIWLAGFLFALPELLFA. Residues 191–221 lie on the Extracellular side of the membrane; sequence KVVQPHNNESLPQCIFSQENEAETRAWFASR. Asn-198 is a glycosylation site (N-linked (GlcNAc...) asparagine). Residues 222-242 traverse the membrane as a helical segment; it reads FLYHTGGFLLPMLVMAWCYVG. Topologically, residues 243–261 are cytoplasmic; that stretch reads VVHRLLQAQRRPQRQKAVR. The chain crosses the membrane as a helical span at residues 262-282; the sequence is VAILVTSIFLLCWSPYHIVIF. Residues 283–306 are Extracellular-facing; the sequence is LDTLERLKAVNSSCELSGYLSVAI. A helical transmembrane segment spans residues 307-327; the sequence is TLCEFLGLAHCCLNPMLYTFA. At 328-374 the chain is on the cytoplasmic side; sequence GVKFRSDLSRLLTKLGCAGPASLCQLFPGWRKSSLSESENATSLTTF.

The protein belongs to the G-protein coupled receptor 1 family. As to expression, expressed in neuronal and lymphatic tissue.

The protein localises to the cell membrane. Functionally, cytokine receptor that binds to B-lymphocyte chemoattractant (BLC). Involved in B-cell migration into B-cell follicles of spleen and Peyer patches but not into those of mesenteric or peripheral lymph nodes. The protein is C-X-C chemokine receptor type 5 (Cxcr5) of Rattus norvegicus (Rat).